The primary structure comprises 569 residues: Sulfite reductase [NADPH] hemoprotein beta-component (569 aa).

[4Fe-4S] cluster contacts are provided by cysteine 433, cysteine 439, cysteine 478, and cysteine 482. Position 482 (cysteine 482) interacts with siroheme.

It belongs to the nitrite and sulfite reductase 4Fe-4S domain family. In terms of assembly, alpha(8)-beta(8). The alpha component is a flavoprotein, the beta component is a hemoprotein. Siroheme serves as cofactor. [4Fe-4S] cluster is required as a cofactor.

It carries out the reaction hydrogen sulfide + 3 NADP(+) + 3 H2O = sulfite + 3 NADPH + 4 H(+). Its pathway is sulfur metabolism; hydrogen sulfide biosynthesis; hydrogen sulfide from sulfite (NADPH route): step 1/1. Component of the sulfite reductase complex that catalyzes the 6-electron reduction of sulfite to sulfide. This is one of several activities required for the biosynthesis of L-cysteine from sulfate. The sequence is that of Sulfite reductase [NADPH] hemoprotein beta-component from Buchnera aphidicola subsp. Acyrthosiphon pisum (strain Tuc7).